Here is a 381-residue protein sequence, read N- to C-terminus: Cytochrome b (381 aa).

4 helical membrane passes run 32–52 (GGSL…LLAM), 76–98 (MILR…LHVL), 113–133 (VWIS…IGYV), and 179–199 (FYSF…FHIA). His82 and His96 together coordinate heme b. Heme b-binding residues include His183 and His197. Position 202 (His202) interacts with a ubiquinone. The next 4 membrane-spanning stretches (helical) occupy residues 225 to 245 (FGAK…ILVF), 289 to 309 (AMGV…PFIG), 318 to 338 (ITEW…WLGG), and 345 to 365 (TSFV…VCQP).

It belongs to the cytochrome b family. In terms of assembly, the main subunits of complex b-c1 are: cytochrome b, cytochrome c1 and the Rieske protein. It depends on heme b as a cofactor.

Its subcellular location is the mitochondrion inner membrane. Functionally, component of the ubiquinol-cytochrome c reductase complex (complex III or cytochrome b-c1 complex) that is part of the mitochondrial respiratory chain. The b-c1 complex mediates electron transfer from ubiquinol to cytochrome c. Contributes to the generation of a proton gradient across the mitochondrial membrane that is then used for ATP synthesis. The polypeptide is Cytochrome b (MT-CYB) (Chlamydomonas reinhardtii (Chlamydomonas smithii)).